The primary structure comprises 529 residues: 2-(3-amino-3-carboxypropyl)histidine synthase subunit 2-2 (529 aa).

[4Fe-4S] cluster is bound by residues Cys130, Cys151, and Cys366.

The protein belongs to the DPH1/DPH2 family. DPH2 subfamily. In terms of assembly, component of the 2-(3-amino-3-carboxypropyl)histidine synthase complex composed of DPH1, DPH2, DPH3 and a NADH-dependent reductase, predominantly CBR1. Requires [4Fe-4S] cluster as cofactor.

The protein resides in the cytoplasm. It participates in protein modification; peptidyl-diphthamide biosynthesis. Functionally, required for the first step of diphthamide biosynthesis, a post-translational modification of histidine which occurs in elongation factor 2. DPH1 and DPH2 transfer a 3-amino-3-carboxypropyl (ACP) group from S-adenosyl-L-methionine (SAM) to a histidine residue, the reaction is assisted by a reduction system comprising DPH3 and a NADH-dependent reductase, predominantly CBR1. Facilitates the reduction of the catalytic iron-sulfur cluster found in the DPH1 subunit. The chain is 2-(3-amino-3-carboxypropyl)histidine synthase subunit 2-2 from Candida albicans (strain SC5314 / ATCC MYA-2876) (Yeast).